The primary structure comprises 265 residues: Methylthioribulose-1-phosphate dehydratase (265 aa).

Cys-118 contacts substrate. Residues His-136 and His-138 each coordinate Zn(2+). Glu-161 (proton donor/acceptor) is an active-site residue. His-226 is a Zn(2+) binding site.

It belongs to the aldolase class II family. MtnB subfamily. It depends on Zn(2+) as a cofactor.

It localises to the cytoplasm. The enzyme catalyses 5-(methylsulfanyl)-D-ribulose 1-phosphate = 5-methylsulfanyl-2,3-dioxopentyl phosphate + H2O. The protein operates within amino-acid biosynthesis; L-methionine biosynthesis via salvage pathway; L-methionine from S-methyl-5-thio-alpha-D-ribose 1-phosphate: step 2/6. Its function is as follows. Catalyzes the dehydration of methylthioribulose-1-phosphate (MTRu-1-P) into 2,3-diketo-5-methylthiopentyl-1-phosphate (DK-MTP-1-P). The sequence is that of Methylthioribulose-1-phosphate dehydratase from Scheffersomyces stipitis (strain ATCC 58785 / CBS 6054 / NBRC 10063 / NRRL Y-11545) (Yeast).